A 198-amino-acid polypeptide reads, in one-letter code: Probable GTP-binding protein EngB (198 aa).

The 163-residue stretch at 36–198 (SDPQFAFIGR…NLSKLQELLE (163 aa)) folds into the EngB-type G domain. GTP contacts are provided by residues 44-51 (GRSNVGKS), 70-74 (GRTQL), 88-91 (DLPG), 155-158 (NKID), and 182-184 (ISA). The Mg(2+) site is built by serine 51 and threonine 72.

It belongs to the TRAFAC class TrmE-Era-EngA-EngB-Septin-like GTPase superfamily. EngB GTPase family. Mg(2+) serves as cofactor.

Its function is as follows. Necessary for normal cell division and for the maintenance of normal septation. The polypeptide is Probable GTP-binding protein EngB (Mesomycoplasma hyopneumoniae (strain J / ATCC 25934 / NCTC 10110) (Mycoplasma hyopneumoniae)).